The chain runs to 523 residues: MLFADVVRTSEAVRATRSRKTKVAALAELLRAAESAELAPVVAWLSGELRQGRIGTGWRTLTGVRVPPALDAALEVATVDAIFDELAAVSGAGSGNRRKELLTRLWSAATEPEQEFLLRLLTGELRQGALTALVAEAVAAAADVPVEQVRRAYMLSGQLPVTAEAALRGGAAALAEFRLEVGRPIQPMLAAPGASLEEAMTEFGGEVSVEHKLDGARIQVHRDGDRIAVFTRTLRDITAGVPELVELVARLDCTSVVLDGETLALTDAGRPRPFQETMSRFATADPARAAEVDLPPGTPVVPPVSSTRELLLHPYFFDCLHLDGRDLLDAPLSERRAALLAVVGEHAIPALIRPEPEAAAEYFDGALAAGHEGLMVKSLSAPYAAGRRGRSWQKIKPTHTLDLLVLGAEWGYGRRTGYLSNLHLGARDPRTGEPVMVGKTFKGLTDALLAWQTAEFPRHERARDEHTVYLWPELVVEIALDGVQVSPRYPGGVALRFARVVRYRPDKTPDQADTIDTVRGLLP.

Position 210 (Glu210) interacts with ATP. Lys212 serves as the catalytic N6-AMP-lysine intermediate. Positions 217, 232, 261, 317, 388, and 394 each coordinate ATP.

It belongs to the ATP-dependent DNA ligase family. Mg(2+) is required as a cofactor.

It carries out the reaction ATP + (deoxyribonucleotide)n-3'-hydroxyl + 5'-phospho-(deoxyribonucleotide)m = (deoxyribonucleotide)n+m + AMP + diphosphate.. Its function is as follows. DNA ligase that seals nicks in double-stranded DNA during DNA replication, DNA recombination and DNA repair. The sequence is that of Probable DNA ligase from Nocardia farcinica (strain IFM 10152).